Reading from the N-terminus, the 522-residue chain is Biotin-dependent long chain acyl-coenzyme A carboxylase beta4 subunit (522 aa).

The region spanning 11 to 261 (TAEKLAELRE…NCFDKPPVVN (251 aa)) is the CoA carboxyltransferase N-terminal domain. Residues 270–503 (GHDLELDSIV…RLLLRKSMHL (234 aa)) enclose the CoA carboxyltransferase C-terminal domain.

It belongs to the AccD/PCCB family. The biotin-dependent long-chain acyl-CoA carboxylase (LCC) complex is composed of AccA3, which contains the biotin carboxylase (BC) and biotin carboxyl carrier protein (BCCP) domains, and AccD4, which contains the carboxyl transferase (CT) domain. The complex also contains the beta5 subunit AccD5 and the epsilon subunit AccE5. The four subunits are essential for activity, but AccD5, together with AccE5, probably plays a structural role rather than a catalytic one.

In terms of biological role, component of a biotin-dependent acyl-CoA carboxylase complex. This subunit transfers the CO2 from carboxybiotin to the CoA ester substrate. When associated with the alpha3 subunit AccA3, the beta5 subunit AccD5 and the epsilon subunit AccE5, forms the LCC complex, which is involved in the carboxylation of long chain acyl-CoA. The LCC complex can use C16-C24 substrates, the highest specific activity is obtained with carboxy-C20-CoA. Has low activity with acetyl-CoA and propionyl-CoA. The protein is Biotin-dependent long chain acyl-coenzyme A carboxylase beta4 subunit of Mycobacterium tuberculosis (strain ATCC 25618 / H37Rv).